Reading from the N-terminus, the 700-residue chain is Methionine--tRNA ligase (700 aa).

A 'HIGH' region motif is present at residues P16–H26. C148, C151, C161, and C164 together coordinate Zn(2+). The 'KMSKS' region motif lies at K337 to S341. K340 contacts ATP. Residues D594–G700 enclose the tRNA-binding domain.

Belongs to the class-I aminoacyl-tRNA synthetase family. MetG type 1 subfamily. In terms of assembly, homodimer. Zn(2+) is required as a cofactor.

Its subcellular location is the cytoplasm. It catalyses the reaction tRNA(Met) + L-methionine + ATP = L-methionyl-tRNA(Met) + AMP + diphosphate. In terms of biological role, is required not only for elongation of protein synthesis but also for the initiation of all mRNA translation through initiator tRNA(fMet) aminoacylation. The sequence is that of Methionine--tRNA ligase from Janthinobacterium sp. (strain Marseille) (Minibacterium massiliensis).